The following is a 209-amino-acid chain: Homeobox protein ceh-2 (209 aa).

The span at 1–14 (MTLKFSVERLVDSE) shows a compositional bias: basic and acidic residues. Disordered regions lie at residues 1 to 46 (MTLK…KSGK) and 181 to 209 (HKRV…KSVS). Positions 15-24 (KESEEADVEE) are enriched in acidic residues. Residues 126–185 (NKRIRTAFSASQLIQLEKAFEGNHYVVGNERKQLAAKLSLTETQVKVWFQNRRTKHKRVR) constitute a DNA-binding region (homeobox).

It belongs to the EMX homeobox family. In terms of tissue distribution, in the anterior pharynx, expressed in the I3 interneuron, the NSM and M3 motor neuron pairs, the three m2 muscle cells and the three e2 epithelial cells (at protein level).

Its subcellular location is the nucleus. In terms of biological role, required for activity of the M3 pharyngeal motor neuron. This Caenorhabditis elegans protein is Homeobox protein ceh-2.